The following is a 290-amino-acid chain: Nucleotide-binding protein Bpet0443 (290 aa).

9 to 16 contacts ATP; the sequence is GISGSGKS. 58–61 contributes to the GTP binding site; it reads DVRS.

This sequence belongs to the RapZ-like family.

Functionally, displays ATPase and GTPase activities. This chain is Nucleotide-binding protein Bpet0443, found in Bordetella petrii (strain ATCC BAA-461 / DSM 12804 / CCUG 43448).